The following is a 2081-amino-acid chain: MAGSLKLYVFGDEAGDFAGPLQKLCEQRKEVLFLHFLDELNKVLRDEVRRQPRDVRVQIPEFTDVLDLVRHYRDSGSRNQILETTLTLAFRIGVKVHGAAQRLSKHGDAAVAQSWTTLIIGAQKEASIAALAEFNESKGIPHANQAYISANSKDVVSISGPPETVTSLLQHSEYLQKFRTISLDIFAPFHAPHLYNDDDVAEVLQPFSGKNEKRKLFIPVISGLGTLYSPDMDVETLMADVVRDILIRPLLFENVMKTVTETTTASSHQNCQIFSVGPSQAINSLASTLRADTSLNVTTEGPIHTGSPDYEPLNGAQKIAIVGMAGRFPNSDDLESFWSTLQQGLDLHRRVPPDRFDIDAHYDPTGKKLNSTHTPYGCFIEKPGLFDPRFFNMSQREAYQTDPMGRLALVTAYEALEMSGFVPNRTPSSMLDRIGTFYGQTSDDWRTLNAAEKIDMYYIPGTIRAFATGRINYHFKFKGPSYNVDTACSSSFAAIQLACTSLLAKECDTALAGGLNVMTTPDLFAGLSRAHFLSKTGSCKTFDDGADGFCRGDGVGTVVLKRLEDAEADNDPILAVVLGTATNHSSEAVSITRPHGPAQEALYRKILKHTGVDPVDVSYVEMHGTGTQAGDGTEMKSITNVFAPRDKGRRQPDQLIHLGALKANIGHGEASAGVASLIKTVIMMQKNAIPPHVGIKTTMNKTFPHDLNERGVRIAFKETPWVRPDGGKRRAYLNNFGASGGNTGLLLEDRPAPVSTRASDPRTSFVVSLSAKSAYSLDQNINRLATYLEGNPDTSLPALSYTTTARRVHYPHRVSYAVRSIPETIKSLRSAQSKAIKPDPASSGKIAFLFTGQGSHYTALGKQLFEDCQTFRNDLVEFNRIGQKQGFPTFLPLIDGSEDVASLSPVALQLGQSCIQIALARLWKSWGITPSSVLGHSLGEYAALNVAGVLSASDTIYLVGRRAQLLEELCTPGSHKMLAIAASVSSVKEILGDKDIEVACINGPNETVISGLAEQMESYSKTLKATDVKCSLLSTAYAFHSAQIQVIVEQYRKVASSVHFGPPNVPVISPLLGDVVTDGNVFGPDYLCRQAREAVNFMGALKAAESKGVVDNNVIWLEIGPAPVCSAFVKSSLGSKALTLPSLRKQEDVWKTLSGTLSNLYSKGLTIEWEEVHREYEASHTVLALPSYCFEEKNYWLDYHNNWCLTKGQKLVESAAPKRRGRHLLTPSVQKVIKEDFGQTKITVVAESDLSDPDLNHAVTGHLVNGSALCPAGVYAESALTLAGYIYHRVKKTEDIGMDVRALEIVKPLIAKGRDQKEKQVFRITATADQPLKLVKISYNSVSADGSLGVLHATCHVEYGDIKTWRAEWSRLAYLVRSRIDVMNDGVKGRQYQKLDRKAAYEGFSGFVEYDKQYHGMKEVIMDQKNLEATSILEFQPSNDYGEFEIDPRFIDNISHLSGFILNGSGATDTRKQVFVSHGWDHLQIAEPLSSSKSYSNYVKMHEIEKATMAGDVYIFDGEEMVALVGGVKFKAIPRAVINQLLPPVKGSKALEKSAPRQNPKATATKTTQKPQAPVPVPQKQNKAIIDDFLALLCEELGVELSELQDDTAFADIGLDSLMSLSITGRMREELDLEAIPSSVFTDYPTVGQVKELILKLAGSSSDENTTDTPDEEEDPATADADNTEMIRENPLESVSPNVSSSEAMDGFLAIVCEEVGVDLEELLEVQNFAGAGVDSLMSLTITGRAREDLDMDIPSSFFVDYPTVDQARLAIASLMGGGDQTGATTPYSGSDDAKSSTSSLTAGSVLTPDDDMDAQDISQLTRPATSIVLQGSLKTASKTLFLLPDGSGSATSYAALPRVSPDTCVVALNCPFMKTPSEYTTGIEGVAALYLSEIRRRQPEGPYVLGGWSAGGILAYAVACQLIEMGEEIEDLFLIDSPCPINLQPLPSELLHFIDSLGLLGAQGSAPKWLIPHFEASIKNLTAFVPHAMDPDEAPRTHIIWARDGLVSESDEKQFPRSDAEAKSVKFLLDGRQNLGTYGWEKLIGSENISVDFIEGNHFTMMREPKVNQLPSILDRLIGA.

The N-terminal acylcarrier protein transacylase (SAT) domain (SAT) stretch occupies residues 85-190; it reads TLTLAFRIGV…ISLDIFAPFH (106 aa). One can recognise a Ketosynthase family 3 (KS3) domain in the interval 316-749; the sequence is AQKIAIVGMA…GGNTGLLLED (434 aa). Residues C488, H623, and H667 each act as for beta-ketoacyl synthase activity in the active site. Positions 849–1147 are malonyl-CoA:ACP transacylase (MAT) domain; that stretch reads LFTGQGSHYT…LTLPSLRKQE (299 aa). Residues 1230 to 1364 form an N-terminal hotdog fold region; it reads QKVIKEDFGQ…CHVEYGDIKT (135 aa). The region spanning 1230–1539 is the PKS/mFAS DH domain; sequence QKVIKEDFGQ…FKAIPRAVIN (310 aa). Residues 1259 to 1536 are product template (PT) domain; that stretch reads VTGHLVNGSA…GVKFKAIPRA (278 aa). Residue H1262 is the Proton acceptor; for dehydratase activity of the active site. The segment at 1392 to 1539 is C-terminal hotdog fold; the sequence is YQKLDRKAAY…FKAIPRAVIN (148 aa). Catalysis depends on D1452, which acts as the Proton donor; for dehydratase activity. A disordered region spans residues 1549 to 1578; that stretch reads KALEKSAPRQNPKATATKTTQKPQAPVPVP. The segment covering 1558-1572 has biased composition (low complexity); sequence QNPKATATKTTQKPQ. The 79-residue stretch at 1580–1658 folds into the Carrier 1 domain; the sequence is KQNKAIIDDF…QVKELILKLA (79 aa). Residue S1617 is modified to O-(pantetheine 4'-phosphoryl)serine. Positions 1659–1700 are disordered; that stretch reads GSSSDENTTDTPDEEEDPATADADNTEMIRENPLESVSPNVS. Residues 1665 to 1677 are compositionally biased toward acidic residues; that stretch reads NTTDTPDEEEDPA. The Carrier 2 domain maps to 1699–1776; the sequence is VSSSEAMDGF…QARLAIASLM (78 aa). S1736 is subject to O-(pantetheine 4'-phosphoryl)serine. Residues 1783-1809 form a disordered region; that stretch reads GATTPYSGSDDAKSSTSSLTAGSVLTP. A thioesterase (TE) domain region spans residues 1840 to 2070; that stretch reads TLFLLPDGSG…TMMREPKVNQ (231 aa).

The catalysed reaction is 3 malonyl-CoA + acetyl-CoA + 2 H(+) = orsellinate + 3 CO2 + 4 CoA. It functions in the pathway secondary metabolite biosynthesis. Functionally, non-reducing polyketide synthase; part of the gene cluster that mediates the biosynthesis of terrein, a fungal metabolite with ecological, antimicrobial, antiproliferative, and antioxidative activities. The first step in the pathway is performed by the polyketide synthase terA that produces 4-hydroxy-6-methylpyranon (4-HMP), orsellinic acid (OA), and 2,3-dehydro-6-hydroxymellein (2,3-dehydro-6-HM) by condensing acetyl-CoA with two, three, or four malonyl-CoA units, respectively. 4-HMP and OA are not pathway intermediates, but are rather shunt or side products. 2,3-dehydro-6-HM is further converted to 6-hydroxymellein (6-HM) by the 6-hydroxymellein synthase terB. The monooxygenases terC and terD, the multicopper oxidase terE and the Kelch-like protein terF are then involved in the transformation of 6-HM to terrein. Even if they are co-regulated with the other terrein cluster genes, terH and terI seem to be dispensable for terrein production; whereas one or both of the 2 transporters terG and terJ are probably required for efficient secretion of metabolites. The chain is Non-reducing polyketide synthase terA from Aspergillus terreus (strain NIH 2624 / FGSC A1156).